We begin with the raw amino-acid sequence, 331 residues long: Laforin (331 aa).

The CBM20 domain occupies Met1–Leu124. At Ser25 the chain carries Phosphoserine; by AMPK. Substrate is bound by residues Trp32, Lys87, Gly103 to Asp107, Asp197, Asp235, and Arg241. Positions His156–Lys323 constitute a Tyrosine-protein phosphatase domain. The active-site Phosphocysteine intermediate is the Cys266. The Glucan phosphatase signature motif CXAGXGR motif lies at Cys266 to Arg272. Residues Asn267–Arg272 and Tyr304 contribute to the substrate site.

This sequence belongs to the protein-tyrosine phosphatase family. In terms of assembly, homodimer. Interacts with itself. Interacts with PPP1R3B, PPP1R3C, PPP1R3D, HIRIP5, and EPM2AIP1. Binds glycogen and Lafora bodies. Interacts with NHLRC1/malin (via the NHL repeats). Forms a complex with NHLRC1/malin and HSP70. Interacts with PPP1R3D; in the presence of NHLC1/malin the interaction leads to ubiquitination and autophagic degradation of PPP1R3D. Interacts (via the phosphatase domain) with MAPT/Tau; the interaction dephosphorylates MAPT. Interacts with PRDM8. In terms of processing, polyubiquitinated by NHLRC1/malin. Phosphorylation on Ser-25 by AMPK affects the phosphatase activity of the enzyme and its ability to homodimerize and interact with NHLRC1, PPP1R3C or PRKAA2. As to expression, widely expressed.

Its subcellular location is the cytoplasm. It localises to the endoplasmic reticulum membrane. The protein localises to the cell membrane. The enzyme catalyses O-phospho-L-tyrosyl-[protein] + H2O = L-tyrosyl-[protein] + phosphate. It catalyses the reaction O-phospho-L-seryl-[protein] + H2O = L-seryl-[protein] + phosphate. The catalysed reaction is O-phospho-L-threonyl-[protein] + H2O = L-threonyl-[protein] + phosphate. Functionally, plays an important role in preventing glycogen hyperphosphorylation and the formation of insoluble aggregates, via its activity as glycogen phosphatase, and by promoting the ubiquitination of proteins involved in glycogen metabolism via its interaction with the E3 ubiquitin ligase NHLRC1/malin. Dephosphorylates phosphotyrosine and synthetic substrates, such as para-nitrophenylphosphate (pNPP), and has low activity with phosphoserine and phosphothreonine substrates (in vitro). Has also been shown to dephosphorylate MAPT. Shows strong phosphatase activity towards complex carbohydrates in vitro, avoiding glycogen hyperphosphorylation which is associated with reduced branching and formation of insoluble aggregates. Forms a complex with NHLRC1/malin and HSP70, which suppresses the cellular toxicity of misfolded proteins by promoting their degradation through the ubiquitin-proteasome system (UPS). Acts as a scaffold protein to facilitate PPP1R3C/PTG ubiquitination by NHLRC1/malin. Also promotes proteasome-independent protein degradation through the macroautophagy pathway. The chain is Laforin (Epm2a) from Rattus norvegicus (Rat).